The chain runs to 99 residues: UPF0235 protein Neut_2146 (99 aa).

It belongs to the UPF0235 family.

This chain is UPF0235 protein Neut_2146, found in Nitrosomonas eutropha (strain DSM 101675 / C91 / Nm57).